The following is a 368-amino-acid chain: Zinc finger protein 24 (368 aa).

A Glycyl lysine isopeptide (Lys-Gly) (interchain with G-Cter in SUMO2) cross-link involves residue Lys-22. Lys-27 participates in a covalent cross-link: Glycyl lysine isopeptide (Lys-Gly) (interchain with G-Cter in SUMO1); alternate. Lys-27 participates in a covalent cross-link: Glycyl lysine isopeptide (Lys-Gly) (interchain with G-Cter in SUMO2); alternate. Residues 52-134 enclose the SCAN box domain; that stretch reads RQRFRQFGYQ…TVLEDLESEL (83 aa). Phosphoserine occurs at positions 132 and 142. Glycyl lysine isopeptide (Lys-Gly) (interchain with G-Cter in SUMO2) cross-links involve residues Lys-147, Lys-177, and Lys-236. The segment at 251 to 273 adopts a C2H2-type 1 zinc-finger fold; it reads HICDECGKHFSQGSALILHQRIH. Positions 251–301 are necessary and sufficient for nuclear localization; the sequence is HICDECGKHFSQGSALILHQRIHSGEKPYGCVECGKAFSRSSILVQHQRVH. Residue Ser-274 is modified to Phosphoserine. Glycyl lysine isopeptide (Lys-Gly) (interchain with G-Cter in SUMO2) cross-links involve residues Lys-277 and Lys-286. C2H2-type zinc fingers lie at residues 279 to 301, 307 to 329, and 335 to 357; these read YGCVECGKAFSRSSILVQHQRVH, YKCLECGKAFSQNSGLINHQRIH, and YECVQCGKSYSQSSNLFRHQRRH. Residue Ser-292 is modified to Phosphoserine. Tyr-335 carries the post-translational modification Phosphotyrosine. Residues Lys-361 and Lys-367 each participate in a glycyl lysine isopeptide (Lys-Gly) (interchain with G-Cter in SUMO2) cross-link.

This sequence belongs to the krueppel C2H2-type zinc-finger protein family. Post-translationally, sumoylated. In terms of tissue distribution, expressed in many tissues except in heart.

Its subcellular location is the nucleus. In terms of biological role, transcription factor required for myelination of differentiated oligodendrocytes. Required for the conversion of oligodendrocytes from the premyelinating to the myelinating state. In the developing central nervous system (CNS), involved in the maintenance in the progenitor stage by promoting the cell cycle. Specifically binds to the 5'-TCAT-3' DNA sequence. Has transcription repressor activity in vitro. The polypeptide is Zinc finger protein 24 (ZNF24) (Homo sapiens (Human)).